We begin with the raw amino-acid sequence, 666 residues long: Protein-arginine deiminase type-4 (666 aa).

Ca(2+) contacts are provided by Asn153, Asp155, Asp165, Asp168, Asp176, and Asp179. 2 positions are modified to citrulline: Arg212 and Arg218. Gln349 provides a ligand contact to Ca(2+). The active site involves Asp350. Residues Glu351, Glu353, Asp369, and Ser370 each contribute to the Ca(2+) site. Citrulline occurs at positions 372, 374, and 383. Substrate is bound at residue Arg374. Ca(2+) contacts are provided by Phe407, Leu410, and Glu411. Catalysis depends on residues His471, Asp473, and Cys648.

Belongs to the protein arginine deiminase family. Requires Ca(2+) as cofactor. Autocitrullination at Arg-372 and Arg-374 inactivates the enzyme. In terms of tissue distribution, expressed in pluripotent embryonic stem and induced pluripotent stem cells but not multipotent neural stem cells.

The protein resides in the cytoplasm. It localises to the nucleus. It is found in the cytoplasmic granule. The catalysed reaction is L-arginyl-[protein] + H2O = L-citrullyl-[protein] + NH4(+). Strongly Inhibited by F-amidine and N-alpha-benzoyl-N5-(2-chloro-1-iminoethyl)-L-ornithine amide (Cl-amidine). These inhibitors are however not specific to PADI4 and also inhibit other members of the family. Catalyzes the citrullination/deimination of arginine residues of proteins such as histones, thereby playing a key role in histone code and regulation of stem cell maintenance. Citrullinates histone H1 at 'Arg-54' (to form H1R54ci), histone H3 at 'Arg-2', 'Arg-8', 'Arg-17' and/or 'Arg-26' (to form H3R2ci, H3R8ci, H3R17ci, H3R26ci, respectively) and histone H4 at 'Arg-3' (to form H4R3ci). Acts as a key regulator of stem cell maintenance by mediating citrullination of histone H1: citrullination of 'Arg-54' of histone H1 (H1R54ci) results in H1 displacement from chromatin and global chromatin decondensation, thereby promoting pluripotency and stem cell maintenance. Promotes profound chromatin decondensation during the innate immune response to infection in neutrophils by mediating formation of H1R54ci. Required for the formation of neutrophil extracellular traps (NETs); NETs are mainly composed of DNA fibers and are released by neutrophils to bind pathogens during inflammation. Citrullination of histone H3 prevents their methylation by CARM1 and HRMT1L2/PRMT1 and represses transcription. Citrullinates EP300/P300 at 'Arg-2142', which favors its interaction with NCOA2/GRIP1. The chain is Protein-arginine deiminase type-4 (Padi4) from Mus musculus (Mouse).